The sequence spans 158 residues: Cyclic pyranopterin monophosphate synthase (158 aa).

Substrate is bound by residues 75 to 77 (LCH) and 113 to 114 (ME). Asp-128 is an active-site residue.

The protein belongs to the MoaC family. In terms of assembly, homohexamer; trimer of dimers.

It catalyses the reaction (8S)-3',8-cyclo-7,8-dihydroguanosine 5'-triphosphate = cyclic pyranopterin phosphate + diphosphate. It functions in the pathway cofactor biosynthesis; molybdopterin biosynthesis. In terms of biological role, catalyzes the conversion of (8S)-3',8-cyclo-7,8-dihydroguanosine 5'-triphosphate to cyclic pyranopterin monophosphate (cPMP). The chain is Cyclic pyranopterin monophosphate synthase from Histophilus somni (strain 129Pt) (Haemophilus somnus).